A 274-amino-acid chain; its full sequence is TATA box-binding protein-associated factor RNA polymerase I subunit D (274 aa).

The span at 1–19 (MDSLNYTTACDSAVETENQ) shows a compositional bias: polar residues. Disordered stretches follow at residues 1 to 45 (MDSL…RQRN) and 84 to 111 (NKKR…RTTR). Ser-20 carries the phosphoserine modification. The span at 84-110 (NKKRKRKKKKYKPTGRSVGRPKGRRTT) shows a compositional bias: basic residues. 2 positions are modified to phosphoserine: Ser-132 and Ser-229.

In terms of assembly, component of the transcription factor SL1/TIF-IB complex, composed of TBP and at least TAF1A, TAF1B, TAF1C and TAF1D. Interacts with UBTF.

The protein resides in the nucleus. Its function is as follows. Component of the transcription factor SL1/TIF-IB complex, which is involved in the assembly of the PIC (preinitiation complex) during RNA polymerase I-dependent transcription. The rate of PIC formation probably is primarily dependent on the rate of association of SL1/TIF-IB with the rDNA promoter. SL1/TIF-IB is involved in stabilization of nucleolar transcription factor 1/UBTF on rDNA. Formation of SL1/TIF-IB excludes the association of TBP with TFIID subunits. In Bos taurus (Bovine), this protein is TATA box-binding protein-associated factor RNA polymerase I subunit D (TAF1D).